Consider the following 219-residue polypeptide: Isovaleryl-homoserine lactone synthase (219 aa).

This sequence belongs to the autoinducer synthase family.

The enzyme catalyses 3-methylbutanoyl-CoA + S-adenosyl-L-methionine = N-isovaleryl-L-homoserine lactone + S-methyl-5'-thioadenosine + CoA + H(+). Functionally, catalyzes the synthesis of IV-HSL (isovaleryl-homoserine lactone), a quorum-sensing (QS) autoinducer molecule which binds to BjaR1 transcriptional regulator to activate expression of QS-dependent genes. Is active with isovaleryl-CoA but cannot use isovaleryl-ACP as acyl donor. The sequence is that of Isovaleryl-homoserine lactone synthase (bjaI) from Bradyrhizobium diazoefficiens (strain JCM 10833 / BCRC 13528 / IAM 13628 / NBRC 14792 / USDA 110).